A 489-amino-acid polypeptide reads, in one-letter code: Glutamate--tRNA ligase (489 aa).

A 'HIGH' region motif is present at residues 10 to 20 (PSPTGFLHIGG). Residues 261–265 (KLSKR) carry the 'KMSKS' region motif. Lysine 264 contacts ATP.

It belongs to the class-I aminoacyl-tRNA synthetase family. Glutamate--tRNA ligase type 1 subfamily. As to quaternary structure, monomer.

The protein localises to the cytoplasm. The catalysed reaction is tRNA(Glu) + L-glutamate + ATP = L-glutamyl-tRNA(Glu) + AMP + diphosphate. Catalyzes the attachment of glutamate to tRNA(Glu) in a two-step reaction: glutamate is first activated by ATP to form Glu-AMP and then transferred to the acceptor end of tRNA(Glu). The polypeptide is Glutamate--tRNA ligase (Finegoldia magna (strain ATCC 29328 / DSM 20472 / WAL 2508) (Peptostreptococcus magnus)).